Here is a 493-residue protein sequence, read N- to C-terminus: Serine/threonine-protein kinase 3 (493 aa).

In terms of domain architecture, Protein kinase spans 26-277; it reads FDVLEKLGEG…ATQLLQHPFI (252 aa). Residues 32–40 and K55 each bind ATP; that span reads LGEGSYGSV. D145 acts as the Proton acceptor in catalysis. Position 179 is a phosphothreonine; by autocatalysis (T179). Residues 286 to 327 adopt a coiled-coil conformation; it reads LRDLITEAMDIKAKRHEELQRELEEEDENSEEDELDSHTMVK. 2 disordered regions span residues 303 to 336 and 369 to 414; these read ELQR…AGTM and DDEE…NCNQ. Acidic residues predominate over residues 308–320; sequence LEEEDENSEEDEL. Residues 325–336 show a composition bias toward polar residues; sequence MVKTNSESAGTM. The span at 369-378 shows a compositional bias: acidic residues; sequence DDEEEEEEED. A compositionally biased stretch (basic and acidic residues) spans 398-410; it reads YFDKQDSKNKPHD. Residues 439–486 form the SARAH domain; sequence FDFLKNLSFEELQMRLKALDPMMEREIEDLRQRYNAKRQPILDAMDAK. Positions 444–477 form a coiled coil; that stretch reads NLSFEELQMRLKALDPMMEREIEDLRQRYNAKRQ.

It belongs to the protein kinase superfamily. STE Ser/Thr protein kinase family. STE20 subfamily. In terms of assembly, homodimer; mediated via the coiled-coil region. The cofactor is Mg(2+).

It is found in the cytoplasm. The protein resides in the nucleus. The enzyme catalyses L-seryl-[protein] + ATP = O-phospho-L-seryl-[protein] + ADP + H(+). It catalyses the reaction L-threonyl-[protein] + ATP = O-phospho-L-threonyl-[protein] + ADP + H(+). Its activity is regulated as follows. Inhibited by the C-terminal non-catalytic region. Activated by caspase-cleavage. Full activation also requires homodimerization and autophosphorylation of Thr-179. Functionally, stress-activated, pro-apoptotic kinase which, following caspase-cleavage, enters the nucleus and induces chromatin condensation followed by internucleosomal DNA fragmentation. Key component of the Hippo signaling pathway which plays a pivotal role in organ size control and tumor suppression by restricting proliferation and promoting apoptosis. The core of this pathway is composed of a kinase cascade wherein stk3/mst2 and stk4/mst1, in complex with its regulatory protein sav1, phosphorylates and activates lats1/2 in complex with its regulatory protein mob1, which in turn phosphorylates and inactivates yap1 oncoprotein and wwtr1/taz. Phosphorylation of yap1 by lats2 inhibits its translocation into the nucleus to regulate cellular genes important for cell proliferation, cell death, and cell migration. This is Serine/threonine-protein kinase 3 (stk3) from Xenopus laevis (African clawed frog).